Consider the following 134-residue polypeptide: Large ribosomal subunit protein uL16c (134 aa).

The protein belongs to the universal ribosomal protein uL16 family. In terms of assembly, part of the 50S ribosomal subunit.

It is found in the plastid. It localises to the chloroplast. In Oltmannsiellopsis viridis (Marine flagellate), this protein is Large ribosomal subunit protein uL16c.